A 434-amino-acid polypeptide reads, in one-letter code: Glutamate-1-semialdehyde 2,1-aminomutase (434 aa).

Lysine 265 bears the N6-(pyridoxal phosphate)lysine mark.

The protein belongs to the class-III pyridoxal-phosphate-dependent aminotransferase family. HemL subfamily. In terms of assembly, homodimer. Requires pyridoxal 5'-phosphate as cofactor.

It is found in the cytoplasm. It catalyses the reaction (S)-4-amino-5-oxopentanoate = 5-aminolevulinate. Its pathway is porphyrin-containing compound metabolism; protoporphyrin-IX biosynthesis; 5-aminolevulinate from L-glutamyl-tRNA(Glu): step 2/2. The sequence is that of Glutamate-1-semialdehyde 2,1-aminomutase from Ruminiclostridium cellulolyticum (strain ATCC 35319 / DSM 5812 / JCM 6584 / H10) (Clostridium cellulolyticum).